Here is a 288-residue protein sequence, read N- to C-terminus: Probable proteasome subunit alpha type-7 (288 aa).

Thr-2 carries the N-acetylthreonine modification. The interval Ile-247–Glu-288 is disordered. Over residues Gly-249–Asn-268 the composition is skewed to acidic residues. Over residues Ala-269–Thr-279 the composition is skewed to low complexity.

The protein belongs to the peptidase T1A family. In terms of assembly, the 26S proteasome consists of a 20S proteasome core and two 19S regulatory subunits. The 20S proteasome core is composed of 28 subunits that are arranged in four stacked rings, resulting in a barrel-shaped structure. The two end rings are each formed by seven alpha subunits, and the two central rings are each formed by seven beta subunits. The catalytic chamber with the active sites is on the inside of the barrel. The alpha and beta forms are probably products of the same gene with different post-translational modifications.

It localises to the cytoplasm. Its subcellular location is the nucleus. In terms of biological role, the proteasome degrades poly-ubiquitinated proteins in the cytoplasm and in the nucleus. It is essential for the regulated turnover of proteins and for the removal of misfolded proteins. The proteasome is a multicatalytic proteinase complex that is characterized by its ability to cleave peptides with Arg, Phe, Tyr, Leu, and Glu adjacent to the leaving group at neutral or slightly basic pH. It has an ATP-dependent proteolytic activity. This chain is Probable proteasome subunit alpha type-7 (PRE10), found in Saccharomyces cerevisiae (strain ATCC 204508 / S288c) (Baker's yeast).